The sequence spans 377 residues: MSWQQAAGYGAGDAMARRAPSVVVAGGGTAGHIEPALALADAVRRLRPDARVTALGTERGLENRLVPARGYPLELVPPVPMPRKPTPELLKLPLKVRESVKRTREVLDRVGADVVVGFGGYVSLPAYLAARGKTPIVVHEANARAGLANKVGAKFAERVLSATPDSGLAGARTIGIPLRESITTLDRAALRAQARAHFGLHPHAPTILVFGGSQGARTLNTAFSGAADALGRAGVGVLHAHGPKNTLAVQQVPGAPVYNAVPYLERMDLAYAAADLVVCRSGAMTVAEVSAVGLPAVFVPLPHGNGEQALNAQPVVSAGGARLVPDEQMTPQRVVEELLPLALDAQRLQEMSRATLSTGHREADRVLAQIVLEVAGR.

Residues 29–31 (TAG), N142, R179, S213, and Q308 contribute to the UDP-N-acetyl-alpha-D-glucosamine site.

The protein belongs to the glycosyltransferase 28 family. MurG subfamily.

The protein localises to the cell membrane. The catalysed reaction is di-trans,octa-cis-undecaprenyl diphospho-N-acetyl-alpha-D-muramoyl-L-alanyl-D-glutamyl-meso-2,6-diaminopimeloyl-D-alanyl-D-alanine + UDP-N-acetyl-alpha-D-glucosamine = di-trans,octa-cis-undecaprenyl diphospho-[N-acetyl-alpha-D-glucosaminyl-(1-&gt;4)]-N-acetyl-alpha-D-muramoyl-L-alanyl-D-glutamyl-meso-2,6-diaminopimeloyl-D-alanyl-D-alanine + UDP + H(+). It participates in cell wall biogenesis; peptidoglycan biosynthesis. Functionally, cell wall formation. Catalyzes the transfer of a GlcNAc subunit on undecaprenyl-pyrophosphoryl-MurNAc-pentapeptide (lipid intermediate I) to form undecaprenyl-pyrophosphoryl-MurNAc-(pentapeptide)GlcNAc (lipid intermediate II). The sequence is that of UDP-N-acetylglucosamine--N-acetylmuramyl-(pentapeptide) pyrophosphoryl-undecaprenol N-acetylglucosamine transferase from Saccharopolyspora erythraea (strain ATCC 11635 / DSM 40517 / JCM 4748 / NBRC 13426 / NCIMB 8594 / NRRL 2338).